A 788-amino-acid polypeptide reads, in one-letter code: Ciliated left-right organizer metallopeptidase (788 aa).

Positions 1–20 (MLLLLLLLLLLPPLVLRVAA) are cleaved as a signal peptide. At 21–735 (SRCLHDETQK…DHNPSMTHLR (715 aa)) the chain is on the extracellular side. Positions 40 to 56 (SQLPSKSRSSSLTLPSS) are enriched in low complexity. Residues 40–59 (SQLPSKSRSSSLTLPSSRDP) are disordered. Zn(2+) is bound at residue histidine 305. The active site involves glutamate 306. Residue histidine 309 coordinates Zn(2+). N-linked (GlcNAc...) asparagine glycosylation occurs at asparagine 333. Histidine 385 is a binding site for Zn(2+). 4 N-linked (GlcNAc...) asparagine glycosylation sites follow: asparagine 425, asparagine 491, asparagine 524, and asparagine 713. Residues 736 to 756 (LSMGLCLMLLILVGVMGTTAY) form a helical membrane-spanning segment. Residues 757 to 788 (QKRATLPVRPSASYHSPELHSTRVPVRGIREV) are Cytoplasmic-facing. The interval 767–788 (SASYHSPELHSTRVPVRGIREV) is disordered.

Belongs to the peptidase M8 family. Zn(2+) is required as a cofactor.

The protein localises to the membrane. Putative metalloproteinase that plays a role in left-right patterning process. The sequence is that of Ciliated left-right organizer metallopeptidase from Homo sapiens (Human).